The following is an 882-amino-acid chain: Valine--tRNA ligase (882 aa).

The short motif at 45–55 (PNVTGKLHLGH) is the 'HIGH' region element. The 'KMSKS' region motif lies at 519 to 523 (KMSKS). An ATP-binding site is contributed by Lys522. Residues 808–882 (LADLLNVEEE…RIAEMKKIKS (75 aa)) adopt a coiled-coil conformation.

This sequence belongs to the class-I aminoacyl-tRNA synthetase family. ValS type 1 subfamily. As to quaternary structure, monomer.

It localises to the cytoplasm. It carries out the reaction tRNA(Val) + L-valine + ATP = L-valyl-tRNA(Val) + AMP + diphosphate. Functionally, catalyzes the attachment of valine to tRNA(Val). As ValRS can inadvertently accommodate and process structurally similar amino acids such as threonine, to avoid such errors, it has a 'posttransfer' editing activity that hydrolyzes mischarged Thr-tRNA(Val) in a tRNA-dependent manner. The protein is Valine--tRNA ligase of Streptococcus pyogenes serotype M28 (strain MGAS6180).